The sequence spans 183 residues: ATP-dependent protease subunit HslV (183 aa).

The active site involves Thr13. Na(+) contacts are provided by Gly168, Cys171, and Thr174.

It belongs to the peptidase T1B family. HslV subfamily. In terms of assembly, a double ring-shaped homohexamer of HslV is capped on each side by a ring-shaped HslU homohexamer. The assembly of the HslU/HslV complex is dependent on binding of ATP.

It localises to the cytoplasm. The enzyme catalyses ATP-dependent cleavage of peptide bonds with broad specificity.. Its activity is regulated as follows. Allosterically activated by HslU binding. Protease subunit of a proteasome-like degradation complex believed to be a general protein degrading machinery. This Xanthomonas oryzae pv. oryzae (strain MAFF 311018) protein is ATP-dependent protease subunit HslV.